Here is a 726-residue protein sequence, read N- to C-terminus: Peroxisomal bifunctional enzyme (726 aa).

The segment at 1–284 (MAEYLRLPHS…FAERSAPKWS (284 aa)) is enoyl-CoA hydratase / isomerase. Residue lysine 38 is modified to N6-succinyllysine. Glycine 103 provides a ligand contact to substrate. Lysine 167 is modified (N6-acetyllysine; alternate). At lysine 167 the chain carries N6-succinyllysine; alternate. Position 173 is an N6-acetyllysine (lysine 173). Lysine 185 is modified (N6-succinyllysine). An N6-acetyllysine; alternate modification is found at lysine 221. Lysine 221 carries the post-translational modification N6-succinyllysine; alternate. N6-succinyllysine occurs at positions 282, 292, and 333. The tract at residues 285 to 575 (TPSGASWKTA…DMLCELGRFG (291 aa)) is 3-hydroxyacyl-CoA dehydrogenase. An N6-acetyllysine mark is found at lysine 348 and lysine 352. Positions 352-371 (KSRQQCGQQRSGPKPRFSSS) are disordered. Polar residues predominate over residues 353–371 (SRQQCGQQRSGPKPRFSSS). Lysine 467 carries the post-translational modification N6-acetyllysine. Lysine 535 bears the N6-succinyllysine mark. 3 positions are modified to N6-acetyllysine; alternate: lysine 587, lysine 594, and lysine 713. Residues lysine 587, lysine 594, and lysine 713 each carry the N6-succinyllysine; alternate modification. The short motif at 724–726 (SKL) is the Microbody targeting signal element. Lysine 725 carries the N6-succinyllysine modification.

In the N-terminal section; belongs to the enoyl-CoA hydratase/isomerase family. The protein in the C-terminal section; belongs to the 3-hydroxyacyl-CoA dehydrogenase family. Monomer. Acetylated, leading to enhanced enzyme activity. Acetylation is enhanced by up to 80% after treatment either with trichostin A (TSA) or with nicotinamide (NAM) with highest increase on Lys-348. Acetylation and enzyme activity increased by about 1.5% on addition of fatty acids.

The protein localises to the peroxisome. It catalyses the reaction a (3S)-3-hydroxyacyl-CoA = a (2E)-enoyl-CoA + H2O. The enzyme catalyses a 4-saturated-(3S)-3-hydroxyacyl-CoA = a (3E)-enoyl-CoA + H2O. The catalysed reaction is a (3Z)-enoyl-CoA = a 4-saturated (2E)-enoyl-CoA. It carries out the reaction a (3E)-enoyl-CoA = a 4-saturated (2E)-enoyl-CoA. It catalyses the reaction a (3S)-3-hydroxyacyl-CoA + NAD(+) = a 3-oxoacyl-CoA + NADH + H(+). The enzyme catalyses (2S,3S)-3-hydroxy-2-methylbutanoyl-CoA = (2E)-2-methylbut-2-enoyl-CoA + H2O. The catalysed reaction is (3S)-hydroxyhexadecanoyl-CoA + NAD(+) = 3-oxohexadecanoyl-CoA + NADH + H(+). It carries out the reaction (3S)-hydroxyhexadecanoyl-CoA = (2E)-hexadecenoyl-CoA + H2O. It catalyses the reaction (2E)-hexadecenedioyl-CoA + H2O = (3S)-hydroxyhexadecanedioyl-CoA. The enzyme catalyses (3S)-hydroxyhexadecanedioyl-CoA + NAD(+) = 3-oxohexadecanedioyl-CoA + NADH + H(+). The catalysed reaction is (3E,5Z)-tetradecadienoyl-CoA = (2E,5Z)-tetradecadienoyl-CoA. It carries out the reaction (3E,5Z)-octadienoyl-CoA = (2E,5Z)-octadienoyl-CoA. It catalyses the reaction (3S)-hydroxydecanoyl-CoA + NAD(+) = 3-oxodecanoyl-CoA + NADH + H(+). The enzyme catalyses (3E)-decenoyl-CoA = (2E)-decenoyl-CoA. The catalysed reaction is (3Z)-hexenoyl-CoA = (2E)-hexenoyl-CoA. It carries out the reaction (3E)-hexenoyl-CoA = (2E)-hexenoyl-CoA. It catalyses the reaction (3S)-hydroxydecanoyl-CoA = (2E)-decenoyl-CoA + H2O. The enzyme catalyses (3S)-hydroxyhexanoyl-CoA = (2E)-hexenoyl-CoA + H2O. It functions in the pathway lipid metabolism; fatty acid beta-oxidation. Its activity is regulated as follows. Enzyme activity enhanced by acetylation. Its function is as follows. Peroxisomal trifunctional enzyme possessing 2-enoyl-CoA hydratase, 3-hydroxyacyl-CoA dehydrogenase, and delta 3, delta 2-enoyl-CoA isomerase activities. Catalyzes two of the four reactions of the long chain fatty acids peroxisomal beta-oxidation pathway. Can also use branched-chain fatty acids such as 2-methyl-2E-butenoyl-CoA as a substrate, which is hydrated into (2S,3S)-3-hydroxy-2-methylbutanoyl-CoA. Optimal isomerase for 2,5 double bonds into 3,5 form isomerization in a range of enoyl-CoA species. Also able to isomerize both 3-cis and 3-trans double bonds into the 2-trans form in a range of enoyl-CoA species. Regulates the amount of medium-chain dicarboxylic fatty acids which are essential regulators of all fatty acid oxidation pathways. Also involved in the degradation of long-chain dicarboxylic acids through peroxisomal beta-oxidation. In Cavia porcellus (Guinea pig), this protein is Peroxisomal bifunctional enzyme (EHHADH).